A 247-amino-acid chain; its full sequence is UPF0309 protein Lm4b_02611 (247 aa).

Residues 31–214 (VAESIENDGV…ETMVNDNFTP (184 aa)) form the SIS domain.

The protein belongs to the UPF0309 family.

This Listeria monocytogenes serotype 4b (strain CLIP80459) protein is UPF0309 protein Lm4b_02611.